The primary structure comprises 426 residues: Transcriptional enhancer factor TEF-1 (426 aa).

At M1 the chain carries N-acetylmethionine. Residues M1–P12 show a composition bias toward polar residues. Residues M1–A31 form a disordered region. S11 bears the Phosphoserine mark. The segment covering N15–D28 has biased composition (basic and acidic residues). Residues D28–D104 constitute a DNA-binding region (TEA). K108 carries the post-translational modification N6-lactoyllysine. The segment at G167–D426 is transcriptional activation.

As to quaternary structure, interacts with YAP1 and WWTR1/TAZ. In terms of processing, lactylation by AARS1 promotes nuclear localization and stabilization of YAP1, leading to increased Hippo signaling pathway. Delactylated by SIRT1. In developing skeletal muscle and myocardium, in mitotic neuroblasts both in the brain and spinal cord. At later stages of embryogenesis expressed in several developing structures such as the olfactory system, the intestine, and the kidney.

It localises to the nucleus. Its function is as follows. Transcription factor which plays a key role in the Hippo signaling pathway, a pathway involved in organ size control and tumor suppression by restricting proliferation and promoting apoptosis. The core of this pathway is composed of a kinase cascade wherein MST1/MST2, in complex with its regulatory protein SAV1, phosphorylates and activates LATS1/2 in complex with its regulatory protein MOB1, which in turn phosphorylates and inactivates YAP1 oncoprotein and WWTR1/TAZ. Acts by mediating gene expression of YAP1 and WWTR1/TAZ, thereby regulating cell proliferation, migration and epithelial mesenchymal transition (EMT) induction. Binds specifically and cooperatively to the SPH and GT-IIC 'enhansons' (5'-GTGGAATGT-3') and activates transcription in vivo in a cell-specific manner. The activation function appears to be mediated by a limiting cell-specific transcriptional intermediary factor (TIF). Involved in cardiac development. Binds to the M-CAT motif. This is Transcriptional enhancer factor TEF-1 (Tead1) from Mus musculus (Mouse).